We begin with the raw amino-acid sequence, 377 residues long: Succinyl-diaminopimelate desuccinylase (377 aa).

His-67 contacts Zn(2+). Residue Asp-69 is part of the active site. A Zn(2+)-binding site is contributed by Asp-100. Glu-134 (proton acceptor) is an active-site residue. 3 residues coordinate Zn(2+): Glu-135, Glu-163, and His-349.

Belongs to the peptidase M20A family. DapE subfamily. Homodimer. Requires Zn(2+) as cofactor. It depends on Co(2+) as a cofactor.

The enzyme catalyses N-succinyl-(2S,6S)-2,6-diaminopimelate + H2O = (2S,6S)-2,6-diaminopimelate + succinate. It functions in the pathway amino-acid biosynthesis; L-lysine biosynthesis via DAP pathway; LL-2,6-diaminopimelate from (S)-tetrahydrodipicolinate (succinylase route): step 3/3. Functionally, catalyzes the hydrolysis of N-succinyl-L,L-diaminopimelic acid (SDAP), forming succinate and LL-2,6-diaminopimelate (DAP), an intermediate involved in the bacterial biosynthesis of lysine and meso-diaminopimelic acid, an essential component of bacterial cell walls. The polypeptide is Succinyl-diaminopimelate desuccinylase (Haemophilus influenzae (strain PittGG)).